Reading from the N-terminus, the 266-residue chain is Hydroxyacylglutathione hydrolase (266 aa).

His53, His55, Asp57, His58, His118, Asp140, and His178 together coordinate Zn(2+).

This sequence belongs to the metallo-beta-lactamase superfamily. Glyoxalase II family. In terms of assembly, monomer. Requires Zn(2+) as cofactor.

It carries out the reaction an S-(2-hydroxyacyl)glutathione + H2O = a 2-hydroxy carboxylate + glutathione + H(+). It functions in the pathway secondary metabolite metabolism; methylglyoxal degradation; (R)-lactate from methylglyoxal: step 2/2. In terms of biological role, thiolesterase that catalyzes the hydrolysis of S-D-lactoyl-glutathione to form glutathione and D-lactic acid. In Cupriavidus metallidurans (strain ATCC 43123 / DSM 2839 / NBRC 102507 / CH34) (Ralstonia metallidurans), this protein is Hydroxyacylglutathione hydrolase.